The chain runs to 109 residues: Nucleoid-associated protein SO_2014 (109 aa).

Belongs to the YbaB/EbfC family. As to quaternary structure, homodimer.

The protein resides in the cytoplasm. Its subcellular location is the nucleoid. Its function is as follows. Binds to DNA and alters its conformation. May be involved in regulation of gene expression, nucleoid organization and DNA protection. The protein is Nucleoid-associated protein SO_2014 of Shewanella oneidensis (strain ATCC 700550 / JCM 31522 / CIP 106686 / LMG 19005 / NCIMB 14063 / MR-1).